The sequence spans 481 residues: UDP-N-acetylmuramoyl-L-alanyl-D-glutamate--L-lysine ligase (481 aa).

Ser42 provides a ligand contact to UDP-N-acetyl-alpha-D-muramoyl-L-alanyl-D-glutamate. Residue 118–124 coordinates ATP; sequence GTKGKTT. UDP-N-acetyl-alpha-D-muramoyl-L-alanyl-D-glutamate contacts are provided by residues Gln158, 160 to 161, Ser187, and Arg195; that span reads TT. Residue Lys229 is modified to N6-carboxylysine. The L-lysine recognition motif motif lies at 404–407; that stretch reads DDPN.

The protein belongs to the MurCDEF family. MurE subfamily. Carboxylation is probably crucial for Mg(2+) binding and, consequently, for the gamma-phosphate positioning of ATP.

The protein resides in the cytoplasm. The catalysed reaction is UDP-N-acetyl-alpha-D-muramoyl-L-alanyl-D-glutamate + L-lysine + ATP = UDP-N-acetyl-alpha-D-muramoyl-L-alanyl-gamma-D-glutamyl-L-lysine + ADP + phosphate + H(+). It functions in the pathway cell wall biogenesis; peptidoglycan biosynthesis. Catalyzes the addition of L-lysine to the nucleotide precursor UDP-N-acetylmuramoyl-L-alanyl-D-glutamate (UMAG) in the biosynthesis of bacterial cell-wall peptidoglycan. The polypeptide is UDP-N-acetylmuramoyl-L-alanyl-D-glutamate--L-lysine ligase (Streptococcus pyogenes serotype M6 (strain ATCC BAA-946 / MGAS10394)).